Here is a 391-residue protein sequence, read N- to C-terminus: MSGPVPSRVRVYTDVNTHRPREYWDYESHVVEWGNQDDYQLVRKLGRGKYSEVFEAINITNNEKVVVKILKPVKKKKIKREIKILENLRGGPNIITLADIVKDPASRTPALAFEHVNNTDFKQLYQTLTDYDIRFYMYEILKALDYCHSMGIMHRDVKPHNVMIDHEHRKLRLIDWGLAEFYHPGQEYNVRVASRYFKGPELLVDYQMYDYSLDMWSLGCMLASMIFRKEPFFHGHDNYDQLVRIAKVLGTEDLYDYIDKYNIELDPRFNDILGRHSRKRWERFVHSENQHLVSPEALDFLDKLLRYDHQSRLTAREAMEHPYFYTVVKDQARMGSSSMPGGSTPVSSANMMSGISSVPTPSPLGPLAGSPVIAAANPLGMPVPAAAGAQQ.

Positions 36 to 41 (QDDYQL) are interaction with beta subunit. One can recognise a Protein kinase domain in the interval 39–324 (YQLVRKLGRG…AREAMEHPYF (286 aa)). ATP-binding positions include 45-53 (LGRGKYSEV) and Lys-68. Asp-156 acts as the Proton acceptor in catalysis. Phosphothreonine; by CDK1 is present on residues Thr-344 and Thr-360. Phosphoserine; by CDK1 is present on residues Ser-362 and Ser-370.

Belongs to the protein kinase superfamily. Ser/Thr protein kinase family. CK2 subfamily. As to quaternary structure, heterotetramer composed of two catalytic subunits (alpha chain and/or alpha' chain) and two regulatory subunits (beta chains). The tetramer can exist as a combination of 2 alpha/2 beta, 2 alpha'/2 beta or 1 alpha/1 alpha'/2 beta subunits. Also part of a CK2-SPT16-SSRP1 complex composed of SSRP1, SUPT16H, CSNK2A1, CSNK2A2 and CSNK2B, which forms following UV irradiation. Interacts with RNPS1. Interacts with SNAI1. Interacts with PML. Interacts with CCAR2. Interacts with HIRIP3. Post-translationally, phosphorylated at Thr-344, Thr-360, Ser-362 and Ser-370 by CDK1 in prophase and metaphase and dephosphorylated during anaphase. Phosphorylation does not directly affect casein kinase 2 activity, but may contribute to its regulation by forming binding sites for interacting proteins and/or targeting it to different compartments.

It localises to the nucleus. It carries out the reaction L-seryl-[protein] + ATP = O-phospho-L-seryl-[protein] + ADP + H(+). The catalysed reaction is L-threonyl-[protein] + ATP = O-phospho-L-threonyl-[protein] + ADP + H(+). Its activity is regulated as follows. Constitutively active protein kinase whose activity is not directly affected by phosphorylation. Seems to be regulated by level of expression and localization. In terms of biological role, catalytic subunit of a constitutively active serine/threonine-protein kinase complex that phosphorylates a large number of substrates containing acidic residues C-terminal to the phosphorylated serine or threonine. Regulates numerous cellular processes, such as cell cycle progression, apoptosis and transcription, as well as viral infection. May act as a regulatory node which integrates and coordinates numerous signals leading to an appropriate cellular response. During mitosis, functions as a component of the p53/TP53-dependent spindle assembly checkpoint (SAC) that maintains cyclin-B-CDK1 activity and G2 arrest in response to spindle damage. Also required for p53/TP53-mediated apoptosis, phosphorylating 'Ser-392' of p53/TP53 following UV irradiation. Phosphorylates a number of DNA repair proteins in response to DNA damage, such as MDC1, MRE11, RAD9A, RAD51 and HTATSF1, promoting their recruitment to DNA damage sites. Can also negatively regulate apoptosis. Phosphorylates the caspases CASP9 and CASP2 and the apoptotic regulator NOL3. Phosphorylation protects CASP9 from cleavage and activation by CASP8, and inhibits the dimerization of CASP2 and activation of CASP8. Phosphorylates YY1, protecting YY1 from cleavage by CASP7 during apoptosis. Regulates transcription by direct phosphorylation of RNA polymerases I, II, III and IV. Also phosphorylates and regulates numerous transcription factors including NF-kappa-B, STAT1, CREB1, IRF1, IRF2, ATF1, ATF4, SRF, MAX, JUN, FOS, MYC and MYB. Phosphorylates Hsp90 and its co-chaperones FKBP4 and CDC37, which is essential for chaperone function. Mediates sequential phosphorylation of FNIP1, promoting its gradual interaction with Hsp90, leading to activate both kinase and non-kinase client proteins of Hsp90. Regulates Wnt signaling by phosphorylating CTNNB1 and the transcription factor LEF1. Acts as an ectokinase that phosphorylates several extracellular proteins. Phosphorylates PML at 'Ser-565' and primes it for ubiquitin-mediated degradation. Plays an important role in the circadian clock function by phosphorylating BMAL1 at 'Ser-90' which is pivotal for its interaction with CLOCK and which controls CLOCK nuclear entry. Phosphorylates FMR1, promoting FMR1-dependent formation of a membraneless compartment. May phosphorylate histone H2A on 'Ser-1'. The protein is Casein kinase II subunit alpha (CSNK2A1) of Oryctolagus cuniculus (Rabbit).